The chain runs to 111 residues: Large ribosomal subunit protein uL22 (111 aa).

This sequence belongs to the universal ribosomal protein uL22 family. In terms of assembly, part of the 50S ribosomal subunit.

Functionally, this protein binds specifically to 23S rRNA; its binding is stimulated by other ribosomal proteins, e.g. L4, L17, and L20. It is important during the early stages of 50S assembly. It makes multiple contacts with different domains of the 23S rRNA in the assembled 50S subunit and ribosome. The globular domain of the protein is located near the polypeptide exit tunnel on the outside of the subunit, while an extended beta-hairpin is found that lines the wall of the exit tunnel in the center of the 70S ribosome. The chain is Large ribosomal subunit protein uL22 from Chlamydia felis (strain Fe/C-56) (Chlamydophila felis).